Reading from the N-terminus, the 278-residue chain is Shikimate dehydrogenase (NADP(+)) (278 aa).

Shikimate contacts are provided by residues 18–20 and Thr65; that span reads SRS. Lys69 serves as the catalytic Proton acceptor. Glu80 provides a ligand contact to NADP(+). Shikimate-binding residues include Asn89 and Asp104. Residues 129–133 and Leu218 contribute to the NADP(+) site; that span reads GAGGS. Shikimate is bound at residue Tyr220. Gly241 serves as a coordination point for NADP(+).

The protein belongs to the shikimate dehydrogenase family. In terms of assembly, homodimer.

The catalysed reaction is shikimate + NADP(+) = 3-dehydroshikimate + NADPH + H(+). It participates in metabolic intermediate biosynthesis; chorismate biosynthesis; chorismate from D-erythrose 4-phosphate and phosphoenolpyruvate: step 4/7. Involved in the biosynthesis of the chorismate, which leads to the biosynthesis of aromatic amino acids. Catalyzes the reversible NADPH linked reduction of 3-dehydroshikimate (DHSA) to yield shikimate (SA). The chain is Shikimate dehydrogenase (NADP(+)) from Rhodopseudomonas palustris (strain TIE-1).